The primary structure comprises 237 residues: Protein UL24 homolog (237 aa).

Belongs to the herpesviridae UL24 family.

This chain is Protein UL24 homolog (20), found in Equus caballus (Horse).